A 423-amino-acid chain; its full sequence is Protein TylM3 (423 aa).

A compositionally biased stretch (low complexity) spans 1 to 21 (MNTAAGPTGTAAGGTTAPAAA). 2 disordered regions span residues 1 to 26 (MNTAAGPTGTAAGGTTAPAAAHDLSR) and 117 to 149 (GSALDAAHGNPGGPPLPGGWPHRPPDREERDDP). A compositionally biased stretch (basic and acidic residues) spans 139–149 (RPPDREERDDP).

This sequence belongs to the cytochrome P450 family.

It participates in antibiotic biosynthesis; tylosin biosynthesis. In terms of biological role, involved in the biosynthesis of the macrolide antibiotic tylosin derived from the polyketide lactone tylactone. TylM3 is required for the glycosylation of the 5-hydroxyl group of tylactone to yield 5-O-mycaminosytylactone. The sequence is that of Protein TylM3 from Streptomyces fradiae (Streptomyces roseoflavus).